The sequence spans 229 residues: All-trans retinoic acid-induced differentiation factor (229 aa).

The first 30 residues, 1 to 30 (MAPHDPGSLTTLVPWAAALLLALGVERALA), serve as a signal peptide directing secretion. Over 31-199 (LPEICTQCPG…YKCMRQGSFS (169 aa)) the chain is Extracellular. N-linked (GlcNAc...) asparagine glycosylation is found at asparagine 44, asparagine 79, asparagine 157, and asparagine 168. The EGF-like domain occupies 152-193 (QKNLCNNTGDPEMCPENGSCVPDGPGLLQCVCADGFHGYKCM). Disulfide bonds link cysteine 156/cysteine 171, cysteine 165/cysteine 181, and cysteine 183/cysteine 192. Residues 200-220 (LLMFFGILGATTLSVSILLWA) form a helical membrane-spanning segment. Topologically, residues 221–229 (TQRRKAKTS) are cytoplasmic.

In terms of assembly, interacts with NELL1; the interaction promotes osteoblastic differentiation and mineralization. Interacts with SLC37A3; the interaction is direct and both proteins are mutually dependent for their stability. As to expression, weakly expressed in hematopoietic cell lines.

The protein resides in the nucleus envelope. The protein localises to the cell membrane. It localises to the lysosome membrane. Functionally, promotes osteoblast cell differentiation and terminal mineralization. Plays a role in inducing the cell cycle arrest via inhibiting CCND1 expression in all-trans-retinoic acid (ATRA) signal pathway. In osteoclasts, forms a transporter complex with ATRAID for nitrogen-containing-bisphophonates (N-BPs) required for releasing N-BP molecules that have trafficked to lysosomes through fluid-phase endocytosis into the cytosol. The protein is All-trans retinoic acid-induced differentiation factor of Homo sapiens (Human).